A 1806-amino-acid chain; its full sequence is Non-reducing polyketide synthase pks12 (1806 aa).

The Starter acyltransferase (SAT) domain occupies 30–191 (TDTMSGMISL…TKLHLRGKVH (162 aa)). Residues 330–755 (ENAIAIVGAG…GSNSALICGE (426 aa)) enclose the Ketosynthase family 3 (KS3) domain. Active-site for beta-ketoacyl synthase activity residues include cysteine 504, histidine 639, and histidine 678. Residues 860–1156 (LAFSGQSKQT…HNPSQHTFLG (297 aa)) form a malonyl-CoA:ACP transacylase (MAT) domain region. The Malonyl-CoA:ACP transacylase (MAT) domain maps to 862 to 1147 (FSGQSKQTIG…IIPMVKRATH (286 aa)). Serine 947 (for acyl/malonyl transferase activity) is an active-site residue. An N-terminal hotdog fold region spans residues 1249–1383 (PQTPPLKLVT…GRFSVTSHID (135 aa)). The 310-residue stretch at 1249–1558 (PQTPPLKLVT…FSRFPIAKLE (310 aa)) folds into the PKS/mFAS DH domain. Residues 1249–1558 (PQTPPLKLVT…FSRFPIAKLE (310 aa)) form a product template (PT) domain region. Histidine 1288 (proton acceptor; for dehydratase activity) is an active-site residue. Residues 1404–1558 (SERLMAGRAY…FSRFPIAKLE (155 aa)) form a C-terminal hotdog fold region. The Proton donor; for dehydratase activity role is filled by aspartate 1468. A Carrier domain is found at 1727 to 1804 (QSKLRIRQRI…ELVDYVVISS (78 aa)). Serine 1764 carries the post-translational modification O-(pantetheine 4'-phosphoryl)serine.

Requires pantetheine 4'-phosphate as cofactor.

The protein operates within secondary metabolite biosynthesis. Non-reducing polyketide synthase; part of the gene cluster that mediates the biosynthesis of mitorubrinol and mitorubrinic acid, two virulence factors that improve T.marneffei intracellular survival in macrophages. The two polyketide synthases pks12 and pks11 are probably responsible for sequential use in the biosynthesis of mitorubrinol and mitorubrinic acid. The first part of the biosynthesis is probably catalyzed by pks12, which synthesized orsellinic acid. This tetraketide is then used as a starter unit for pks11, which possesses a SAT domain, in the second part of the biosynthesis. Pks11, contains a methyltransferase domain, also served that methylates the products, using a methyl group from S-adenosylmethionine. In Talaromyces marneffei (Penicillium marneffei), this protein is Non-reducing polyketide synthase pks12.